A 338-amino-acid chain; its full sequence is 1-aminocyclopropane-1-carboxylate deaminase (338 aa).

Lys-51 bears the N6-(pyridoxal phosphate)lysine mark. Catalysis depends on Ser-78, which acts as the Nucleophile.

It belongs to the ACC deaminase/D-cysteine desulfhydrase family. In terms of assembly, homotrimer. The cofactor is pyridoxal 5'-phosphate.

The enzyme catalyses 1-aminocyclopropane-1-carboxylate + H2O = 2-oxobutanoate + NH4(+). Catalyzes a cyclopropane ring-opening reaction, the irreversible conversion of 1-aminocyclopropane-1-carboxylate (ACC) to ammonia and alpha-ketobutyrate. Allows growth on ACC as a nitrogen source. The sequence is that of 1-aminocyclopropane-1-carboxylate deaminase from Variovorax paradoxus.